The primary structure comprises 468 residues: RUS family member 1 (468 aa).

The residue at position 2 (A2) is an N-acetylalanine. At T49 the chain carries Phosphothreonine. Residues 247–267 (LLMLPLVSGCPGFSLGCFFFL) traverse the membrane as a helical segment.

It belongs to the RUS1 family.

It localises to the membrane. The protein is RUS family member 1 (Rusf1) of Pongo abelii (Sumatran orangutan).